An 832-amino-acid chain; its full sequence is MAMRSGRHPSLLLLLVLLLWLLQVSIIDSVQQETDDLTKQTKEKIYQPLRRSKRRWVITTLELEEEDPGPFPKLIGELFNNMSYNMSLMYLISGPGVDEYPEIGLFSLEDHENGRIYVHRPVDREMTPSFTVYFDVVERSTGKIVDTSLIFNIRISDVNDHAPQFPEKEFNITVQENQSAGQPIFQMLAVDLDEENTPNSQVLYFLISQTPLLKESGFRVDRLSGEIRLSGCLDYETAPQFTLLIRARDCGEPSLSSTTTVHVDVQEGNNHRPAFTQENYKVQIPEGRASQGVLRLLVQDRDSPFTSAWRAKFNILHGNEEGHFDISTDPETNEGILNVIKPLDYETRPAQSLIIVVENEERLVFCERGKLQPPRKAAASATVSVQVTDANDPPAFHPQSFIVNKEEGARPGTLLGTFNAMDPDSQIRYELVHDPANWVSVDKNSGVVITVEPIDRESPHVNNSFYVIIIHAVDDGFPPQTATGTLMLFLSDINDNVPTLRPRSRYMEVCESAVHEPLHIEAEDPDLEPFSDPFTFELDNTWGNAEDTWKLGRNWGQSVELLTLRSLPRGNYLVPLFIGDKQGLSQKQTVHVRICPCASGLTCVELADAEVGLHVGALFPVCAAFVALAVALLFLLRCYFVLEPKRHGCSVSNDEGHQTLVMYNAESKGTSAQTWSDVEGQRPALLICTAAAGPTQGVKDLEEVPPSAASQSAQARCALGSWGYGKPFEPRSVKNIHSTPAYPDATMHRQLLAPVEGRMAETLNQKLHVANVLEDDPGYLPHVYSEEGECGGAPSLSSLASLEQELQPDLLDSLGSKATPFEEIYSESGVPS.

The signal sequence occupies residues 1-27 (MAMRSGRHPSLLLLLVLLLWLLQVSII). Residues 28 to 614 (DSVQQETDDL…ELADAEVGLH (587 aa)) lie on the Extracellular side of the membrane. 4 consecutive Cadherin domains span residues 35–165 (DDLT…APQF), 166–275 (PEKE…RPAF), 276–396 (TQEN…PPAF), and 397–500 (HPQS…VPTL). 4 N-linked (GlcNAc...) asparagine glycosylation sites follow: N81, N85, N171, and N177. N-linked (GlcNAc...) asparagine glycosylation is present at N462. Residues 615-635 (VGALFPVCAAFVALAVALLFL) traverse the membrane as a helical segment. Residues 636 to 832 (LRCYFVLEPK…EIYSESGVPS (197 aa)) lie on the Cytoplasmic side of the membrane. Residues 813–832 (SLGSKATPFEEIYSESGVPS) form a disordered region.

As to quaternary structure, homodimer. Component of a cadherin:catenin adhesion complex composed of at least of CDH26, beta-catenin/CTNNB1, alpha-catenin/CTNNA1 and p120 catenin/CTNND1. N-glycosylated. In terms of tissue distribution, expressed by epithelial cells of gastrointestinal tissue.

The protein localises to the cell membrane. In terms of biological role, cadherins are calcium-dependent cell adhesion proteins. They preferentially interact with themselves in a homophilic manner in connecting cells; cadherins may thus contribute to the sorting of heterogeneous cell types. Ligand for integrins alpha-E/beta-7, ITGAE:ITGAB7, alpha-4/beta-7, ITGA4:ITGAB7 and alpha-4/beta-1, ITGA4:ITGAB1 through which modulates CD4(+) T cells activation. The protein is Cadherin-like protein 26 (CDH26) of Homo sapiens (Human).